Reading from the N-terminus, the 126-residue chain is UPF0538 protein C2orf76 homolog (126 aa).

Belongs to the UPF0538 family.

The chain is UPF0538 protein C2orf76 homolog from Danio rerio (Zebrafish).